The following is an 845-amino-acid chain: uncharacterized protein (845 aa).

Disordered regions lie at residues 17–37 (RRKQDALHSPSLNMDKKNDQP) and 550–573 (AATEAEVEDQNSERNDDNALNESL). Residues 622–707 (LSEQRFEREN…ELKKSNEHTR (86 aa)) are a coiled coil.

This is an uncharacterized protein from Saccharum officinarum (Sugarcane).